Reading from the N-terminus, the 424-residue chain is MAKIVVTGGQALHGEVHISGAKNAVLPILCATLLADAPVEISNVPHLHDVITTVKLLSELGAEVTIDEGTLAKGRSILVDPRSVTHQIAPYELVKTMRASILVLGPLLARYGTAEVSLPGGCAIGSRPVDQHIKGLQALGADISVENGYIKATSNGRLKGGRYVFDMVSVTGTENVLMAAVLAEGTTVLENAAMEPEVTDLADCLIALGAQIEGAGTPRITVQGVERLGGGHHAVLPDRIETGTFLVAAAMTGGSVTVRRARPDTLDAVLDKLTEAGATITTTAESVTLDMHGKRPRAVNLTTAPYPAFPTDMQAQFMALNCVAEGVGVINETIFENRFMHVNELLRLGADIQVEGHTAIVRGAERLSGAPVMATDLRASASLILAGLVADGDTTIDRIYHLDRGYENIEEKLGALGATIRRIA.

22–23 (KN) lines the phosphoenolpyruvate pocket. Arg-98 serves as a coordination point for UDP-N-acetyl-alpha-D-glucosamine. The Proton donor role is filled by Cys-122. Cys-122 is modified (2-(S-cysteinyl)pyruvic acid O-phosphothioketal). Residues 127-131 (RPVDQ), Asp-312, and Ile-334 contribute to the UDP-N-acetyl-alpha-D-glucosamine site.

Belongs to the EPSP synthase family. MurA subfamily.

The protein resides in the cytoplasm. The enzyme catalyses phosphoenolpyruvate + UDP-N-acetyl-alpha-D-glucosamine = UDP-N-acetyl-3-O-(1-carboxyvinyl)-alpha-D-glucosamine + phosphate. The protein operates within cell wall biogenesis; peptidoglycan biosynthesis. Cell wall formation. Adds enolpyruvyl to UDP-N-acetylglucosamine. The sequence is that of UDP-N-acetylglucosamine 1-carboxyvinyltransferase from Xanthomonas campestris pv. campestris (strain B100).